The sequence spans 89 residues: DNA-directed RNA polymerase subunit Rpo6 (89 aa).

This sequence belongs to the archaeal Rpo6/eukaryotic RPB6 RNA polymerase subunit family. Part of the 13-subunit RNA polymerase complex.

It is found in the cytoplasm. It catalyses the reaction RNA(n) + a ribonucleoside 5'-triphosphate = RNA(n+1) + diphosphate. Its function is as follows. DNA-dependent RNA polymerase (RNAP) catalyzes the transcription of DNA into RNA using the four ribonucleoside triphosphates as substrates. Reconstitution experiments show this subunit is required for basic activity. The polypeptide is DNA-directed RNA polymerase subunit Rpo6 (Sulfolobus acidocaldarius (strain ATCC 33909 / DSM 639 / JCM 8929 / NBRC 15157 / NCIMB 11770)).